The primary structure comprises 517 residues: Carotenoid phi-ring synthase (517 aa).

Residues 1–24 form a disordered region; sequence MFARDSGRGHRHGRDRQAAVVPAP. Residues Ala45, 64–65, Arg72, Tyr99, Asp461, and Met472 each bind FAD; that span reads ER.

The protein belongs to the carotenoid/retinoid oxidoreductase family. The cofactor is FAD.

The enzyme catalyses a carotenoid beta-end derivative + 2 A = a carotenoid phi-end derivative + 2 AH2. It participates in carotenoid biosynthesis. Involved in the biosynthesis of isorenieratene, a carotenoid with aromatic end groups. Catalyzes the introduction of two additional double bonds into each ionone ring of beta-carotene to produce isorenieratene. The reaction includes an intramolecular methyl transfer from position C1 to position C2 of the ring. In Streptomyces griseus, this protein is Carotenoid phi-ring synthase.